The following is a 243-amino-acid chain: Segregation and condensation protein A (243 aa).

This sequence belongs to the ScpA family. Component of a cohesin-like complex composed of ScpA, ScpB and the Smc homodimer, in which ScpA and ScpB bind to the head domain of Smc. The presence of the three proteins is required for the association of the complex with DNA.

The protein localises to the cytoplasm. In terms of biological role, participates in chromosomal partition during cell division. May act via the formation of a condensin-like complex containing Smc and ScpB that pull DNA away from mid-cell into both cell halves. This is Segregation and condensation protein A from Staphylococcus aureus (strain NCTC 8325 / PS 47).